An 85-amino-acid polypeptide reads, in one-letter code: Phosphocarrier protein HPr (85 aa).

The 85-residue stretch at 1-85 (MYSKDVEIIA…HLVALIPTLE (85 aa)) folds into the HPr domain. The active-site Pros-phosphohistidine intermediate is the His-15.

This sequence belongs to the HPr family.

It localises to the cytoplasm. General (non sugar-specific) component of the phosphoenolpyruvate-dependent sugar phosphotransferase system (sugar PTS). This major carbohydrate active-transport system catalyzes the phosphorylation of incoming sugar substrates concomitantly with their translocation across the cell membrane. The phosphoryl group from phosphoenolpyruvate (PEP) is transferred to the phosphoryl carrier protein HPr by enzyme I. Phospho-HPr then transfers it to the PTS EIIA domain. This is Phosphocarrier protein HPr (ptsH) from Haemophilus influenzae (strain ATCC 51907 / DSM 11121 / KW20 / Rd).